The primary structure comprises 206 residues: ATP phosphoribosyltransferase (206 aa).

It belongs to the ATP phosphoribosyltransferase family. Short subfamily. As to quaternary structure, heteromultimer composed of HisG and HisZ subunits.

The protein resides in the cytoplasm. It carries out the reaction 1-(5-phospho-beta-D-ribosyl)-ATP + diphosphate = 5-phospho-alpha-D-ribose 1-diphosphate + ATP. Its pathway is amino-acid biosynthesis; L-histidine biosynthesis; L-histidine from 5-phospho-alpha-D-ribose 1-diphosphate: step 1/9. In terms of biological role, catalyzes the condensation of ATP and 5-phosphoribose 1-diphosphate to form N'-(5'-phosphoribosyl)-ATP (PR-ATP). Has a crucial role in the pathway because the rate of histidine biosynthesis seems to be controlled primarily by regulation of HisG enzymatic activity. In Brachyspira hyodysenteriae (strain ATCC 49526 / WA1), this protein is ATP phosphoribosyltransferase.